We begin with the raw amino-acid sequence, 372 residues long: MSTKSKIFLVLLVFCPLSFAAHWLGWGETTVFILAGLAIVPLAAFMGTATEEIAVVIGPNAGGLLNATFGNATELILAYIALKEGLIEVVKATLTGSIIGNLLLVMGFAVFLGGLRYKEQNFQPLAARLNASTMNLGVVAILLPTALQYTSTGVEETVLQNLSVAVAVVLIGVYLLSLVFSMGTHAYLYDVGVAENMEMPELGEDVSEPEPPTEEEKPNLWLWTGVLLVVTLGVAVESELLVGSLEVATESLGLTALFTGVIVLPIIGNAAEHATAVTVAMKDKMDLSMSVVMGSSLQIAFFVAPVLVIVGWAIGQPMDLNFNPFELVAVLVAVLIVNSISSDGTSNWLEGILLLATYAIVALAFFFHPTLV.

11 helical membrane-spanning segments follow: residues 7–27 (IFLV…LGWG), 29–49 (TTVF…MGTA), 62–82 (GGLL…YIAL), 94–114 (LTGS…FLGG), 134–154 (MNLG…STGV), 162–182 (LSVA…VFSM), 222–242 (LWTG…ELLV), 251–271 (SLGL…GNAA), 294–314 (GSSL…GWAI), 320–340 (LNFN…VNSI), and 352–372 (ILLL…PTLV).

The protein belongs to the Ca(2+):cation antiporter (CaCA) (TC 2.A.19) family. Cation/proton exchanger (CAX) subfamily.

The protein resides in the cell inner membrane. Ca(+)/H(+) antiporter that extrudes calcium in exchange for external protons. Plays an important role in salt tolerance. Does not transport sodium or lithium. In Synechocystis sp. (strain ATCC 27184 / PCC 6803 / Kazusa), this protein is Ca(2+)/H(+) antiporter.